The primary structure comprises 469 residues: Origin recognition complex subunit 6 (469 aa).

Low complexity-rich tracts occupy residues 218 to 234 and 275 to 308; these read SSTL…TAPK and ATPT…LSST. Disordered regions lie at residues 218 to 241, 275 to 309, 356 to 423, and 436 to 469; these read SSTL…PIPS, ATPT…SSTN, ESPF…EGDL, and KEQQ…SFFK. Basic and acidic residues-rich tracts occupy residues 380-390 and 409-423; these read SRDELEKESEL and QKEK…EGDL. Residues 454–469 show a composition bias toward polar residues; that stretch reads TPVNATKQLTLDSFFK.

This sequence belongs to the ORC6 family. In terms of assembly, ORC is composed of six subunits.

It is found in the nucleus. Its function is as follows. Component of the origin recognition complex (ORC) that binds origins of replication. DNA-binding is ATP-dependent, however specific DNA sequences that define origins of replication have not been identified so far. ORC is required to assemble the pre-replication complex necessary to initiate DNA replication. The polypeptide is Origin recognition complex subunit 6 (orcF) (Dictyostelium discoideum (Social amoeba)).